We begin with the raw amino-acid sequence, 779 residues long: Endoribonuclease YSH1 (779 aa).

Zn(2+)-binding residues include His-68, His-70, Asp-72, His-73, His-163, and Asp-184. The Proton donor role is filled by His-408. Residue His-430 coordinates Zn(2+). Ser-517 is modified (phosphoserine; by ATM or ATR).

It belongs to the metallo-beta-lactamase superfamily. RNA-metabolizing metallo-beta-lactamase-like family. CPSF2/YSH1 subfamily. In terms of assembly, component of the cleavage and polyadenylation factor (CPF) complex, which is composed of at least PTI1, SYC1, SSU72, GLC7, MPE1, REF2, PFS2, PTA1, YSH1/BRR5, SWD2, CFT2/YDH1, YTH1, CFT1/YHH1, FIP1 and PAP1. Interacts with FIP1, PFS2, RNA14 and YTH1. Zn(2+) serves as cofactor.

The protein localises to the nucleus. Component of the cleavage and polyadenylation factor (CPF) complex, which plays a key role in polyadenylation-dependent pre-mRNA 3'-end formation and cooperates with cleavage factors including the CFIA complex and NAB4/CFIB. Has endonuclease activity. The polypeptide is Endoribonuclease YSH1 (YSH1) (Saccharomyces cerevisiae (strain ATCC 204508 / S288c) (Baker's yeast)).